Here is a 226-residue protein sequence, read N- to C-terminus: Probable chemoreceptor glutamine deamidase CheD (226 aa).

Belongs to the CheD family.

It carries out the reaction L-glutaminyl-[protein] + H2O = L-glutamyl-[protein] + NH4(+). Probably deamidates glutamine residues to glutamate on methyl-accepting chemotaxis receptors (MCPs), playing an important role in chemotaxis. This is Probable chemoreceptor glutamine deamidase CheD from Bordetella avium (strain 197N).